A 179-amino-acid polypeptide reads, in one-letter code: Large ribosomal subunit protein uL6 (179 aa).

This sequence belongs to the universal ribosomal protein uL6 family. In terms of assembly, part of the 50S ribosomal subunit.

Its function is as follows. This protein binds to the 23S rRNA, and is important in its secondary structure. It is located near the subunit interface in the base of the L7/L12 stalk, and near the tRNA binding site of the peptidyltransferase center. This is Large ribosomal subunit protein uL6 from Chlorobium phaeobacteroides (strain BS1).